The primary structure comprises 290 residues: UPF0761 membrane protein YihY (290 aa).

Transmembrane regions (helical) follow at residues 44-64, 104-124, 140-160, 183-203, 210-230, and 244-264; these read LLSL…FPMF, VGAC…DSAL, FAVY…SLAI, VLPL…VPTT, AIVG…GFAL, and VLAV…IVLL.

Belongs to the UPF0761 family.

It is found in the cell inner membrane. The polypeptide is UPF0761 membrane protein YihY (Salmonella arizonae (strain ATCC BAA-731 / CDC346-86 / RSK2980)).